A 224-amino-acid polypeptide reads, in one-letter code: 2-phospho-L-lactate guanylyltransferase (224 aa).

Belongs to the CofC family. In terms of assembly, homodimer.

The enzyme catalyses (2S)-2-phospholactate + GTP + H(+) = (2S)-lactyl-2-diphospho-5'-guanosine + diphosphate. Its pathway is cofactor biosynthesis; coenzyme F420 biosynthesis. Guanylyltransferase that catalyzes the activation of (2S)-2-phospholactate (2-PL) as (2S)-lactyl-2-diphospho-5'-guanosine, via the condensation of 2-PL with GTP. It is involved in the biosynthesis of coenzyme F420, a hydride carrier cofactor. In Methanobrevibacter smithii (strain ATCC 35061 / DSM 861 / OCM 144 / PS), this protein is 2-phospho-L-lactate guanylyltransferase.